Here is a 319-residue protein sequence, read N- to C-terminus: Acetyl-coenzyme A carboxylase carboxyl transferase subunit alpha (319 aa).

The region spanning 39–293 (RLQKKSNDLT…KAVLEKQLHE (255 aa)) is the CoA carboxyltransferase C-terminal domain.

It belongs to the AccA family. Acetyl-CoA carboxylase is a heterohexamer composed of biotin carboxyl carrier protein (AccB), biotin carboxylase (AccC) and two subunits each of ACCase subunit alpha (AccA) and ACCase subunit beta (AccD).

It localises to the cytoplasm. The enzyme catalyses N(6)-carboxybiotinyl-L-lysyl-[protein] + acetyl-CoA = N(6)-biotinyl-L-lysyl-[protein] + malonyl-CoA. The protein operates within lipid metabolism; malonyl-CoA biosynthesis; malonyl-CoA from acetyl-CoA: step 1/1. Functionally, component of the acetyl coenzyme A carboxylase (ACC) complex. First, biotin carboxylase catalyzes the carboxylation of biotin on its carrier protein (BCCP) and then the CO(2) group is transferred by the carboxyltransferase to acetyl-CoA to form malonyl-CoA. In Neisseria gonorrhoeae (strain ATCC 700825 / FA 1090), this protein is Acetyl-coenzyme A carboxylase carboxyl transferase subunit alpha.